We begin with the raw amino-acid sequence, 459 residues long: Light-independent protochlorophyllide reductase subunit N (459 aa).

[4Fe-4S] cluster-binding residues include C22, C47, and C107.

This sequence belongs to the BchN/ChlN family. Protochlorophyllide reductase is composed of three subunits; ChlL, ChlN and ChlB. Forms a heterotetramer of two ChlB and two ChlN subunits. The cofactor is [4Fe-4S] cluster.

It is found in the plastid. The protein localises to the chloroplast. The catalysed reaction is chlorophyllide a + oxidized 2[4Fe-4S]-[ferredoxin] + 2 ADP + 2 phosphate = protochlorophyllide a + reduced 2[4Fe-4S]-[ferredoxin] + 2 ATP + 2 H2O. It participates in porphyrin-containing compound metabolism; chlorophyll biosynthesis (light-independent). Its function is as follows. Component of the dark-operative protochlorophyllide reductase (DPOR) that uses Mg-ATP and reduced ferredoxin to reduce ring D of protochlorophyllide (Pchlide) to form chlorophyllide a (Chlide). This reaction is light-independent. The NB-protein (ChlN-ChlB) is the catalytic component of the complex. The sequence is that of Light-independent protochlorophyllide reductase subunit N from Pinus contorta (Shore pine).